We begin with the raw amino-acid sequence, 183 residues long: MRFSAVAGRYARALLNVAIEKEKEEEYLRFLDLVCQIYESSRELFDNPILKPEKKISLIKEIMKSFGQEMDEFQERFLTLVFERKRQKLLRNIRDLFEYEKILSEQKVPANLSIAHSPEDEELSLLRKFVRKYALKDPVFDISIDESLIAGALVEFEGFRLDTTVQGRLKRIAREALKRGEMS.

It belongs to the ATPase delta chain family. F-type ATPases have 2 components, F(1) - the catalytic core - and F(0) - the membrane proton channel. F(1) has five subunits: alpha(3), beta(3), gamma(1), delta(1), epsilon(1). F(0) has three main subunits: a(1), b(2) and c(10-14). The alpha and beta chains form an alternating ring which encloses part of the gamma chain. F(1) is attached to F(0) by a central stalk formed by the gamma and epsilon chains, while a peripheral stalk is formed by the delta and b chains.

The protein localises to the cell inner membrane. F(1)F(0) ATP synthase produces ATP from ADP in the presence of a proton or sodium gradient. F-type ATPases consist of two structural domains, F(1) containing the extramembraneous catalytic core and F(0) containing the membrane proton channel, linked together by a central stalk and a peripheral stalk. During catalysis, ATP synthesis in the catalytic domain of F(1) is coupled via a rotary mechanism of the central stalk subunits to proton translocation. Its function is as follows. This protein is part of the stalk that links CF(0) to CF(1). It either transmits conformational changes from CF(0) to CF(1) or is implicated in proton conduction. The chain is ATP synthase subunit delta from Thermotoga maritima (strain ATCC 43589 / DSM 3109 / JCM 10099 / NBRC 100826 / MSB8).